Consider the following 526-residue polypeptide: Hyaluronidase-5 (526 aa).

Residues 1–35 form the signal peptide; sequence MRVLYFKHSFFRSLLKSNGLPQTLLVFLLIPCYLT. Cystine bridges form between Cys-60-Cys-351, Cys-223-Cys-237, Cys-376-Cys-387, Cys-381-Cys-435, and Cys-437-Cys-443. Glu-147 acts as the Proton donor in catalysis. Residues Asn-165 and Asn-179 are each glycosylated (N-linked (GlcNAc...) asparagine).

Belongs to the glycosyl hydrolase 56 family. In terms of tissue distribution, expressed in testis, epididymal sperm and epididymides (at protein level). Expressed at highest levels in testis with lesser amounts in epididymal sperm.

It is found in the cell membrane. It localises to the cytoplasmic vesicle. Its subcellular location is the secretory vesicle. The protein resides in the acrosome membrane. The protein localises to the secreted. It carries out the reaction Random hydrolysis of (1-&gt;4)-linkages between N-acetyl-beta-D-glucosamine and D-glucuronate residues in hyaluronate.. Functionally, catalyzes the hydrolysis of hyaluronan into smaller oligosaccharide fragments. Does not appear to be essential for fertilization. The polypeptide is Hyaluronidase-5 (Mus musculus (Mouse)).